The sequence spans 82 residues: RNA-binding protein Hfq (82 aa).

The Sm domain maps to 11–71; the sequence is DTFLNHVRKT…ISTIMPGAPI (61 aa).

The protein belongs to the Hfq family. As to quaternary structure, homohexamer.

Functionally, RNA chaperone that binds small regulatory RNA (sRNAs) and mRNAs to facilitate mRNA translational regulation in response to envelope stress, environmental stress and changes in metabolite concentrations. Also binds with high specificity to tRNAs. This Nitrobacter winogradskyi (strain ATCC 25391 / DSM 10237 / CIP 104748 / NCIMB 11846 / Nb-255) protein is RNA-binding protein Hfq.